A 224-amino-acid polypeptide reads, in one-letter code: Artemin (224 aa).

The N-terminal stretch at 1–39 (MELGLGEPTALSHCLRPRWQPALWPTLAALALLSSVTEA) is a signal peptide. Positions 40–111 (SLDPMSRSPA…AALRGARAAR (72 aa)) are excised as a propeptide. Residues 41-124 (LDPMSRSPAS…RSSRARATDA (84 aa)) form a disordered region. The segment covering 80 to 95 (RPPPQSPQPAPPPPGP) has biased composition (pro residues). A compositionally biased stretch (low complexity) spans 96–116 (ALQSPPAALRGARAARAGTRS). 3 disulfide bridges follow: cysteine 127–cysteine 192, cysteine 154–cysteine 220, and cysteine 158–cysteine 222. Asparagine 206 is a glycosylation site (N-linked (GlcNAc...) asparagine).

It belongs to the TGF-beta family. GDNF subfamily. In terms of assembly, homodimer; disulfide-linked. Interacts with GFRA3 coreceptor and RET: forms a 2:2:2 ternary complex composed of ARTN ligand, GFRA3 and RET receptor. Cochlea. Expressed at higher level in sesorineural epithelium than in the modiolus region or substantia nigra.

The protein localises to the secreted. Growth factor that supports the survival of sensory and sympathetic peripheral neurons in culture and also supports the survival of dopaminergic neurons of the ventral mid-brain. Acts by binding to its coreceptor, GFRA3, leading to autophosphorylation and activation of the RET receptor. Strong attractant of gut hematopoietic cells thus promoting the formation Peyer's patch-like structures, a major component of the gut-associated lymphoid tissue. The chain is Artemin (Artn) from Rattus norvegicus (Rat).